The sequence spans 420 residues: Histidine--tRNA ligase (420 aa).

The protein belongs to the class-II aminoacyl-tRNA synthetase family. As to quaternary structure, homodimer.

Its subcellular location is the cytoplasm. It carries out the reaction tRNA(His) + L-histidine + ATP = L-histidyl-tRNA(His) + AMP + diphosphate + H(+). The polypeptide is Histidine--tRNA ligase (Staphylococcus saprophyticus subsp. saprophyticus (strain ATCC 15305 / DSM 20229 / NCIMB 8711 / NCTC 7292 / S-41)).